A 122-amino-acid chain; its full sequence is Large ribosomal subunit protein bL12 (122 aa).

Belongs to the bacterial ribosomal protein bL12 family. Homodimer. Part of the ribosomal stalk of the 50S ribosomal subunit. Forms a multimeric L10(L12)X complex, where L10 forms an elongated spine to which 2 to 4 L12 dimers bind in a sequential fashion. Binds GTP-bound translation factors.

In terms of biological role, forms part of the ribosomal stalk which helps the ribosome interact with GTP-bound translation factors. Is thus essential for accurate translation. This is Large ribosomal subunit protein bL12 from Streptococcus thermophilus (strain ATCC BAA-491 / LMD-9).